A 309-amino-acid chain; its full sequence is Aspartate carbamoyltransferase catalytic subunit (309 aa).

Residues R57 and T58 each coordinate carbamoyl phosphate. K86 serves as a coordination point for L-aspartate. The carbamoyl phosphate site is built by R107, H135, and Q138. 2 residues coordinate L-aspartate: R168 and R228. 2 residues coordinate carbamoyl phosphate: L267 and P268.

The protein belongs to the aspartate/ornithine carbamoyltransferase superfamily. ATCase family. As to quaternary structure, heterooligomer of catalytic and regulatory chains.

It carries out the reaction carbamoyl phosphate + L-aspartate = N-carbamoyl-L-aspartate + phosphate + H(+). The protein operates within pyrimidine metabolism; UMP biosynthesis via de novo pathway; (S)-dihydroorotate from bicarbonate: step 2/3. Functionally, catalyzes the condensation of carbamoyl phosphate and aspartate to form carbamoyl aspartate and inorganic phosphate, the committed step in the de novo pyrimidine nucleotide biosynthesis pathway. The chain is Aspartate carbamoyltransferase catalytic subunit from Cenarchaeum symbiosum (strain A).